The sequence spans 757 residues: Probable inorganic carbon transporter subunit DabA (757 aa).

Zn(2+)-binding residues include cysteine 321, aspartate 323, histidine 475, and cysteine 490.

Belongs to the inorganic carbon transporter (TC 9.A.2) DabA family. In terms of assembly, forms a complex with DabB. The cofactor is Zn(2+).

Its subcellular location is the cell inner membrane. Functionally, part of an energy-coupled inorganic carbon pump. The polypeptide is Probable inorganic carbon transporter subunit DabA (Idiomarina loihiensis (strain ATCC BAA-735 / DSM 15497 / L2-TR)).